The primary structure comprises 418 residues: Adenosylhomocysteinase (418 aa).

Positions 53, 125, and 150 each coordinate substrate. 151-153 is an NAD(+) binding site; that stretch reads TTT. Residues K180 and D184 each contribute to the substrate site. NAD(+) contacts are provided by residues N185, 214-219, E237, N272, 293-295, and N340; these read GYGWCG and SGH.

Belongs to the adenosylhomocysteinase family. It depends on NAD(+) as a cofactor.

It is found in the cytoplasm. The enzyme catalyses S-adenosyl-L-homocysteine + H2O = L-homocysteine + adenosine. Its pathway is amino-acid biosynthesis; L-homocysteine biosynthesis; L-homocysteine from S-adenosyl-L-homocysteine: step 1/1. Functionally, may play a key role in the regulation of the intracellular concentration of adenosylhomocysteine. This chain is Adenosylhomocysteinase, found in Aquifex aeolicus (strain VF5).